The sequence spans 606 residues: MVEGPGCTLNGEKIRARVLPGQAVTGVRGTALQSLLGPAMSPAASLADVATSAAPMNAKDSGWKLLRLFNGYVYSGVETLGKELFMYFGPRALRIHFGMKGSILINPREGENRAGASPALAVQLTRDLICFYDSSVELRNSVESQQRVRVMEELDICSPKFSFSRAESEVKKQGDRMLCDVLLDQRVLPGVGNIIKNEALFDSGLHPAVKVCQLSDKQACHLVKMTRDFSILFYRCCKAGSAISKHCKVYKRPNCDQCHSKITVCRFGENSRMTYFCPHCQKENPQCVQVCQLPTRNTEISWTPRGEDCFTDSVARKSEEQWSCVVCTLINRPSAKACDACLTTRPLDSVLKNRENSIAFNNLVKYPCNNFENTHTEVKINRKTAFGNTTLVLTDLSNKSSALARKKRANHTIDGESQMFLPTDIGFSDSQHPSKEGINYITQPSNKVNISPTVCAQSKLFSSAHKKFKPAHTSATELKSYNSGLSNSELQTNRTRGHHSKSDGSPLCKMHHRRCVLRVVRKDGENKGRQFYACSLPRGAQCGFFEWADLSFPFCRHGKRSIMKTVLKIGPNNGKNFFVCPLEKKKQCNFFQWAENGPGMEIVPGC.

Val-2 (schiff-base intermediate with DNA; via amino nitrogen) is an active-site residue. The DNA site is built by Asn-193 and Arg-272. The FPG-type zinc-finger motif lies at 248 to 282; that stretch reads KVYKRPNCDQCHSKITVCRFGENSRMTYFCPHCQK. The RanBP2-type zinc-finger motif lies at 318–347; sequence SEEQWSCVVCTLINRPSAKACDACLTTRPL. Ser-451 carries the post-translational modification Phosphoserine. Residues 479–494 are compositionally biased toward polar residues; sequence KSYNSGLSNSELQTNR. The disordered stretch occupies residues 479 to 506; it reads KSYNSGLSNSELQTNRTRGHHSKSDGSP. Zn(2+)-binding residues include Cys-508, His-511, Cys-534, Cys-542, Cys-555, His-557, Cys-580, and Cys-588. 2 GRF-type zinc fingers span residues 508–551 and 555–597; these read CKMH…ADLS and CRHG…AENG.

Belongs to the FPG family. In terms of tissue distribution, expressed in testis, thymus, spleen and bone marrow. In young mice, expressed at higher levels in thymocytes than splenocytes. At 12 dpc, abundant in the subventricular zone (SVZ) of the lateral ventricles. At 17.5 dpc and P0, expression is limited to distinct cells in the cortical SVZ, in cells of the secondary matrix, the dentate gyrus migratory route and the dentate gyrus.

The protein localises to the nucleus. It localises to the chromosome. It carries out the reaction 2'-deoxyribonucleotide-(2'-deoxyribose 5'-phosphate)-2'-deoxyribonucleotide-DNA = a 3'-end 2'-deoxyribonucleotide-(2,3-dehydro-2,3-deoxyribose 5'-phosphate)-DNA + a 5'-end 5'-phospho-2'-deoxyribonucleoside-DNA + H(+). DNA glycosylase which prefers single-stranded DNA (ssDNA), or partially ssDNA structures such as bubble and fork structures, to double-stranded DNA (dsDNA). Mediates interstrand cross-link repair in response to replication stress: acts by mediating DNA glycosylase activity, cleaving one of the two N-glycosyl bonds comprising the interstrand cross-link, which avoids the formation of a double-strand break but generates an abasic site that is bypassed by translesion synthesis polymerases. In vitro, displays strong glycosylase activity towards the hydantoin lesions spiroiminodihydantoin (Sp) and guanidinohydantoin (Gh) in both ssDNA and dsDNA; also recognizes FapyA, FapyG, 5-OHU, 5-OHC, 5-OHMH, Tg and 8-oxoA lesions in ssDNA. No activity on 8-oxoG detected. Also shows weak DNA-(apurinic or apyrimidinic site) lyase activity. In vivo, appears to be the primary enzyme involved in removing Sp and Gh from ssDNA in neonatal tissues. In Mus musculus (Mouse), this protein is Endonuclease 8-like 3 (Neil3).